The following is a 291-amino-acid chain: MSCQSFTSADTFITLNSDASAALPLRMHHSAAECLPASNHATNVMSTATGLHYSVPSCHYGNQPSTYGVMAGSLTPCLYKFPDHTLSHGFPPLHQPLLAEDPAASEFKQELRRKSKLVEEPIDMDSPEIRELEQFANEFKVRRIKLGYTQTNVGEALAAVHGSEFSQTTICRFENLQLSFKNACKLKAILSKWLEEAEQVGALYNEKVGANERKRKRRTTISVAAKDALERHFGEHSKPSSQEIMRMAEELNLEKEVVRVWFCNRRQREKRVKTSLNQSLFSISKEHLECR.

Positions 5 to 13 (SFTSADTFI) match the 9aaTAD motif. The 75-residue stretch at 124 to 198 (MDSPEIRELE…ILSKWLEEAE (75 aa)) folds into the POU-specific domain. The homeobox DNA-binding region spans 214 to 273 (KRKRRTTISVAAKDALERHFGEHSKPSSQEIMRMAEELNLEKEVVRVWFCNRRQREKRVK).

This sequence belongs to the POU transcription factor family. Class-1 subfamily. In terms of assembly, interacts with PITX1. Interacts with LHX3. Interacts with ELK1.

It is found in the nucleus. Its function is as follows. Transcription factor involved in the specification of the lactotrope, somatotrope, and thyrotrope phenotypes in the developing anterior pituitary. Activates growth hormone and prolactin genes. Specifically binds to the consensus sequence 5'-TAAAT-3'. In Mus musculus (Mouse), this protein is Pituitary-specific positive transcription factor 1 (Pou1f1).